The chain runs to 512 residues: Delta(14)-sterol reductase (512 aa).

The next 8 helical transmembrane spans lie at 27-47, 100-120, 140-160, 172-192, 242-262, 278-298, 324-344, and 353-373; these read IGAS…GFLC, AVLG…LLPA, ACLS…VRGP, YIQL…YVYL, SFME…AFAA, WTPL…VIIS, FGFM…SIQA, and ALGP…YYIF. Residues Lys380, Arg384, Leu407, Trp412, and 419 to 420 each bind NADP(+); that span reads NY. Transmembrane regions (helical) follow at residues 418–438 and 458–478; these read INYL…LAAG and MKGA…ILLI. NADP(+) is bound by residues Asp484, 488–492, and Tyr499; that span reads CRRKY.

The protein belongs to the ERG4/ERG24 family.

It is found in the membrane. The enzyme catalyses 4,4-dimethyl-5alpha-cholesta-8,24-dien-3beta-ol + NADP(+) = 4,4-dimethyl-5alpha-cholesta-8,14,24-trien-3beta-ol + NADPH + H(+). It participates in steroid biosynthesis; zymosterol biosynthesis; zymosterol from lanosterol: step 2/6. Reduces the C14=C15 double bond of 4,4-dimethyl-cholesta-8,14,24-trienol to produce 4,4-dimethyl-cholesta-8,24-dienol. The sequence is that of Delta(14)-sterol reductase (ERG3) from Septoria lycopersici (Tomato leaf spot fungus).